A 141-amino-acid polypeptide reads, in one-letter code: Probable mobile endonuclease E (141 aa).

The tract at residues 115 to 141 (KMSKSENRSAFNRRNQTQNIGGNQRKG) is disordered. Polar residues predominate over residues 122 to 141 (RSAFNRRNQTQNIGGNQRKG).

The sequence is that of Probable mobile endonuclease E (mobE) from Escherichia coli (Bacteriophage T4).